We begin with the raw amino-acid sequence, 382 residues long: L-lysine 4-hydroxylase (382 aa).

Residues histidine 182, glutamate 184, and histidine 318 each coordinate Fe cation.

The protein belongs to the clavaminate synthase family. Fe(2+) serves as cofactor.

The enzyme catalyses L-lysine + 2-oxoglutarate + O2 = (4R)-4-hydroxy-L-lysine + succinate + CO2. Functionally, alpha-ketoglutarate-dependent dioxygenase that in vitro catalyzes the regio- and stereoselective hydroxylation of L-lysine, leading to (4R)-4-hydroxy-L-lysine. Cannot use D-lysine or L-ornithine as substrate. This chain is L-lysine 4-hydroxylase, found in Chitinophaga pinensis (strain ATCC 43595 / DSM 2588 / LMG 13176 / NBRC 15968 / NCIMB 11800 / UQM 2034).